Reading from the N-terminus, the 388-residue chain is Alcohol dehydrogenase patD (388 aa).

Cys-46 serves as a coordination point for Zn(2+). His-47 lines the NAD(+) pocket. His-67, Glu-68, Cys-101, Cys-104, and Cys-112 together coordinate Zn(2+). His-67 serves as a coordination point for substrate. Residues Val-198–Gly-203, Ser-295–Leu-297, and Glu-320–Ala-322 contribute to the NAD(+) site.

Belongs to the zinc-containing alcohol dehydrogenase family. Zn(2+) serves as cofactor.

It is found in the cytoplasm. The protein localises to the cytosol. It carries out the reaction neopatulin + NADPH + H(+) = (E)-ascladiol + NADP(+). It participates in mycotoxin biosynthesis; patulin biosynthesis. In terms of biological role, alcohol dehydrogenase; part of the gene cluster that mediates the biosynthesis of patulin, an acetate-derived tetraketide mycotoxin produced by several fungal species that shows antimicrobial properties against several bacteria. PatD catalyzes the conversion of neopatulin into E-ascladiol. The pathway begins with the synthesis of 6-methylsalicylic acid by the polyketide synthase (PKS) patK via condensation of acetate and malonate units. The 6-methylsalicylic acid decarboxylase patG then catalyzes the decarboxylation of 6-methylsalicylic acid to yield m-cresol (also known as 3-methylphenol). These first reactions occur in the cytosol. The intermediate m-cresol is then transported into the endoplasmic reticulum where the cytochrome P450 monooxygenase patH converts it to m-hydroxybenzyl alcohol, which is further converted to gentisyl alcohol by the cytochrome P450 monooxygenase patI. The oxidoreductases patJ and patO further convert gentisyl alcohol to isoepoxydon in the vacuole. PatN catalyzes then the transformation of isoepoxydon into phyllostine. The cluster protein patF is responsible for the conversion from phyllostine to neopatulin whereas the alcohol dehydrogenase patD converts neopatulin to E-ascladiol. The steps between isoepoxydon and E-ascladiol occur in the cytosol, and E-ascladiol is probably secreted to the extracellular space by one of the cluster-specific transporters patC or patM. Finally, the secreted patulin synthase patE catalyzes the conversion of E-ascladiol to patulin. This chain is Alcohol dehydrogenase patD, found in Aspergillus clavatus (strain ATCC 1007 / CBS 513.65 / DSM 816 / NCTC 3887 / NRRL 1 / QM 1276 / 107).